The following is a 160-amino-acid chain: Protein max (160 aa).

Over residues 1–13 (MSDNDDIEVESDE) the composition is skewed to acidic residues. Residues 1–40 (MSDNDDIEVESDEEQPRFQSAADKRAHHNALERKRRDHIK) are disordered. Serine 2 carries the N-acetylserine modification. Phosphoserine is present on residues serine 2 and serine 11. A bHLH domain is found at 23–74 (DKRAHHNALERKRRDHIKDSFHSLRDSVPSLQGEKASRAQILDKATEYIQYM). The span at 29 to 40 (NALERKRRDHIK) shows a compositional bias: basic and acidic residues. Lysine 66 carries the N6-acetyllysine modification. Residues 81–102 (HQQDIDDLKRQNALLEQQVRAL) form a leucine-zipper region. Residues 103 to 160 (EKARSSAQLQTNYPSSDNSLYTNAKGSTISAFDGGSDSSSESEPEEPQSRKKLRMEAS) form a disordered region. Phosphoserine is present on serine 107. Positions 107–132 (SSAQLQTNYPSSDNSLYTNAKGSTIS) are enriched in polar residues. Positions 152-156 (RKKLR) match the Nuclear localization signal motif. Lysine 153 and lysine 154 each carry N6-acetyllysine.

It belongs to the MAX family. Efficient DNA binding requires dimerization with another bHLH protein. Binds DNA as a heterodimer with MYC or MAD. Part of the E2F6.com-1 complex in G0 phase composed of E2F6, MGA, MAX, TFDP1, CBX3, BAT8, EUHMTASE1, RING1, RNF2, MBLR, L3MBTL2 and YAF2. Component of some MLL1/MLL complex, at least composed of the core components KMT2A/MLL1, ASH2L, HCFC1/HCF1, WDR5 and RBBP5, as well as the facultative components BACC1, CHD8, E2F6, HSP70, INO80C, KANSL1, LAS1L, MAX, MCRS1, MGA, MYST1/MOF, PELP1, PHF20, PRP31, RING2, RUVB1/TIP49A, RUVB2/TIP49B, SENP3, TAF1, TAF4, TAF6, TAF7, TAF9 and TEX10. Interacts with SPAG9. The heterodimer MYC:MAX interacts with ABI1; the interaction may enhance MYC:MAX transcriptional activity. Post-translationally, reversible lysine acetylation might regulate the nuclear-cytoplasmic shuttling of specific Max complexes. High levels found in the brain, heart and lung while lower levels are seen in the liver, kidney and skeletal muscle.

The protein localises to the nucleus. The protein resides in the cell projection. It is found in the dendrite. In terms of biological role, transcription regulator. Forms a sequence-specific DNA-binding protein complex with MYC or MAD which recognizes the core sequence 5'-CAC[GA]TG-3'. The MYC:MAX complex is a transcriptional activator, whereas the MAD:MAX complex is a repressor. May repress transcription via the recruitment of a chromatin remodeling complex containing H3 'Lys-9' histone methyltransferase activity. Represses MYC transcriptional activity from E-box elements. The polypeptide is Protein max (Homo sapiens (Human)).